A 396-amino-acid chain; its full sequence is MTQSEKIINLTNHYGAHNYVPLPIVISEAEGVWVKDPEGNTYMDMLSAYSAVNQGHRHPRIIQALKDQADKVTLVSRAFHSDNLGQWYEKICKLAGKDKALPMNTGAEAVETALKAARRWAYDVKGIEPNKAEIIAFNGNFHGRTMAPVSLSSEAEYQRGYGPLLDGFRKVEFGDVNQLKAAINKNTAAILVEPIQGEAGINVPPEGYLKTIRELCDEHQILFIADEIQAGLGRSGKLFATDWDHVKPDVYILGKALGGGVFPISVVLADNEVLDVFTPGSHGSTFGGNPLASAVSIAAIDVIIDEDLPGRSLELGEYFKSELKKIEHPSIKEVRGRGLFIGIELHESARPYCEALKEQGLLCKETHDTVIRFAPPLVITKEELDMALEKIKSVFA.

N6-(pyridoxal phosphate)lysine is present on Lys255.

Belongs to the class-III pyridoxal-phosphate-dependent aminotransferase family. OAT subfamily. Pyridoxal 5'-phosphate is required as a cofactor.

Its subcellular location is the cytoplasm. The enzyme catalyses a 2-oxocarboxylate + L-ornithine = L-glutamate 5-semialdehyde + an L-alpha-amino acid. Its pathway is amino-acid biosynthesis; L-proline biosynthesis; L-glutamate 5-semialdehyde from L-ornithine: step 1/1. Catalyzes the interconversion of ornithine to glutamate semialdehyde. The sequence is that of Ornithine aminotransferase from Staphylococcus epidermidis (strain ATCC 35984 / DSM 28319 / BCRC 17069 / CCUG 31568 / BM 3577 / RP62A).